A 196-amino-acid polypeptide reads, in one-letter code: Nucleoid occlusion factor SlmA (196 aa).

The HTH tetR-type domain maps to 7-68; it reads TNRREEILQA…GLIEFIEEAL (62 aa). Positions 31–50 form a DNA-binding region, H-T-H motif; that stretch reads TTAKLAKQVGVSEAALYRHF. Residues 110–142 are a coiled coil; the sequence is HALMFENERLRDRINQLFERIETQLRQILRERK.

This sequence belongs to the nucleoid occlusion factor SlmA family. Homodimer. Interacts with FtsZ.

The protein localises to the cytoplasm. It is found in the nucleoid. Functionally, required for nucleoid occlusion (NO) phenomenon, which prevents Z-ring formation and cell division over the nucleoid. Acts as a DNA-associated cell division inhibitor that binds simultaneously chromosomal DNA and FtsZ, and disrupts the assembly of FtsZ polymers. SlmA-DNA-binding sequences (SBS) are dispersed on non-Ter regions of the chromosome, preventing FtsZ polymerization at these regions. The polypeptide is Nucleoid occlusion factor SlmA (Vibrio campbellii (strain ATCC BAA-1116)).